A 253-amino-acid chain; its full sequence is LexA repressor (253 aa).

The disordered stretch occupies residues 1–33 (MTSQGRGTRRGGARGNVRAFPENPADAAGLTPR). A DNA-binding region (H-T-H motif) is located at residues 54 to 74 (VREIGEAVGLTSTSSVAHQLK). Active-site for autocatalytic cleavage activity residues include Ser177 and Lys214.

It belongs to the peptidase S24 family. Homodimer.

The catalysed reaction is Hydrolysis of Ala-|-Gly bond in repressor LexA.. In terms of biological role, represses a number of genes involved in the response to DNA damage (SOS response), including recA and lexA. In the presence of single-stranded DNA, RecA interacts with LexA causing an autocatalytic cleavage which disrupts the DNA-binding part of LexA, leading to derepression of the SOS regulon and eventually DNA repair. The chain is LexA repressor from Frankia alni (strain DSM 45986 / CECT 9034 / ACN14a).